Reading from the N-terminus, the 126-residue chain is Aspartate 1-decarboxylase (126 aa).

The active-site Schiff-base intermediate with substrate; via pyruvic acid is Ser-25. The residue at position 25 (Ser-25) is a Pyruvic acid (Ser). Substrate is bound at residue Thr-57. Tyr-58 serves as the catalytic Proton donor. 73–75 (GAA) is a substrate binding site.

The protein belongs to the PanD family. Heterooctamer of four alpha and four beta subunits. The cofactor is pyruvate. Is synthesized initially as an inactive proenzyme, which is activated by self-cleavage at a specific serine bond to produce a beta-subunit with a hydroxyl group at its C-terminus and an alpha-subunit with a pyruvoyl group at its N-terminus.

It is found in the cytoplasm. It carries out the reaction L-aspartate + H(+) = beta-alanine + CO2. The protein operates within cofactor biosynthesis; (R)-pantothenate biosynthesis; beta-alanine from L-aspartate: step 1/1. Its function is as follows. Catalyzes the pyruvoyl-dependent decarboxylation of aspartate to produce beta-alanine. The polypeptide is Aspartate 1-decarboxylase (Erwinia tasmaniensis (strain DSM 17950 / CFBP 7177 / CIP 109463 / NCPPB 4357 / Et1/99)).